The chain runs to 1026 residues: Isoleucine--tRNA ligase (1026 aa).

Residues 51–61 (PTANGRPHIGH) carry the 'HIGH' region motif. The short motif at 591-595 (KMSKS) is the 'KMSKS' region element. Lys-594 contacts ATP.

This sequence belongs to the class-I aminoacyl-tRNA synthetase family. IleS type 2 subfamily. Monomer. Requires Zn(2+) as cofactor.

The protein resides in the cytoplasm. It carries out the reaction tRNA(Ile) + L-isoleucine + ATP = L-isoleucyl-tRNA(Ile) + AMP + diphosphate. In terms of biological role, catalyzes the attachment of isoleucine to tRNA(Ile). As IleRS can inadvertently accommodate and process structurally similar amino acids such as valine, to avoid such errors it has two additional distinct tRNA(Ile)-dependent editing activities. One activity is designated as 'pretransfer' editing and involves the hydrolysis of activated Val-AMP. The other activity is designated 'posttransfer' editing and involves deacylation of mischarged Val-tRNA(Ile). The chain is Isoleucine--tRNA ligase from Thermoplasma acidophilum (strain ATCC 25905 / DSM 1728 / JCM 9062 / NBRC 15155 / AMRC-C165).